The primary structure comprises 94 residues: Protein translocase subunit SecE (94 aa).

The interval 1–32 (MTDAVGSIDMPDAQDEAPDSKKSRKGGKRGKK) is disordered. The segment covering 22–32 (KSRKGGKRGKK) has biased composition (basic residues). The helical transmembrane segment at 65–85 (TVVIIFVVIMIGLVTLIDYGF) threads the bilayer.

Belongs to the SecE/SEC61-gamma family. As to quaternary structure, component of the Sec protein translocase complex. Heterotrimer consisting of SecY, SecE and SecG subunits. The heterotrimers can form oligomers, although 1 heterotrimer is thought to be able to translocate proteins. Interacts with the ribosome. Interacts with SecDF, and other proteins may be involved. Interacts with SecA.

It localises to the cell membrane. Its function is as follows. Essential subunit of the Sec protein translocation channel SecYEG. Clamps together the 2 halves of SecY. May contact the channel plug during translocation. This Streptomyces coelicolor (strain ATCC BAA-471 / A3(2) / M145) protein is Protein translocase subunit SecE.